Reading from the N-terminus, the 491-residue chain is Stromelysin-3 (491 aa).

An N-terminal signal peptide occupies residues 1–35; the sequence is MARAACLLRAISRALLLPLPLLLLLLLLLPPQLMA. Residues 36-101 constitute a propeptide, activation peptide; sequence RARPPENHRH…VLNARNRQKR (66 aa). The short motif at 82-89 is the Cysteine switch element; sequence LRCGVPDP. Residues cysteine 84, histidine 168, and aspartate 170 each contribute to the Zn(2+) site. Ca(2+) is bound by residues aspartate 175, glycine 176, glycine 178, and isoleucine 180. Histidine 183, histidine 196, and histidine 218 together coordinate Zn(2+). The active site involves glutamate 219. Residues histidine 222 and histidine 228 each contribute to the Zn(2+) site. Positions 260–279 are disordered; sequence YGRPQLTPTSPTPTLSSQAG. A compositionally biased stretch (low complexity) spans 263–277; the sequence is PQLTPTSPTPTLSSQ. A disulfide bond links cysteine 297 and cysteine 483. Hemopexin repeat units lie at residues 298-342, 343-385, 387-435, and 436-483; these read ETSF…WQGL, PSPV…KLGL, GSPV…WRGV, and PSEI…FFDC.

Belongs to the peptidase M10A family. The cofactor is Ca(2+). Requires Zn(2+) as cofactor. In terms of processing, the precursor is cleaved by a furin endopeptidase. In terms of tissue distribution, highly expressed in ovary and uterus.

The protein localises to the secreted. It is found in the extracellular space. Its subcellular location is the extracellular matrix. In terms of biological role, may play an important role in the progression of epithelial malignancies. This chain is Stromelysin-3 (Mmp11), found in Rattus norvegicus (Rat).